Consider the following 249-residue polypeptide: Ribosomal RNA small subunit methyltransferase J (249 aa).

Residues arginine 101–aspartate 102, glutamate 117–arginine 118, serine 153–serine 154, and aspartate 171 contribute to the S-adenosyl-L-methionine site.

This sequence belongs to the methyltransferase superfamily. RsmJ family.

The protein resides in the cytoplasm. The enzyme catalyses guanosine(1516) in 16S rRNA + S-adenosyl-L-methionine = N(2)-methylguanosine(1516) in 16S rRNA + S-adenosyl-L-homocysteine + H(+). Specifically methylates the guanosine in position 1516 of 16S rRNA. The sequence is that of Ribosomal RNA small subunit methyltransferase J from Salmonella arizonae (strain ATCC BAA-731 / CDC346-86 / RSK2980).